A 142-amino-acid polypeptide reads, in one-letter code: Hemoglobin subunit alpha-1 (142 aa).

A Globin domain is found at 2–142; sequence KLTAEDKHNV…VAYVLASKYR (141 aa). His59 contributes to the O2 binding site. His88 contacts heme b.

Belongs to the globin family. In terms of assembly, major hemoglobin is a heterotetramer of two alpha-1 chains and two beta-1 chains. Red blood cells.

Its function is as follows. Involved in oxygen transport from the lung to the various peripheral tissues. The sequence is that of Hemoglobin subunit alpha-1 from Pleurodeles waltl (Iberian ribbed newt).